A 553-amino-acid chain; its full sequence is Keratin, type II cytoskeletal 73 (553 aa).

The head stretch occupies residues 1–130 (MNRQFTCKSG…DPEIQKVRAQ (130 aa)). Residues 131–166 (EREQIKALNNKFASFIDKVRFLEQQNQVLQTKWELL) are coil 1A. The 314-residue stretch at 131–444 (EREQIKALNN…KLLEGEECRM (314 aa)) folds into the IF rod domain. The segment at 167 to 185 (QQLDLSNCRRNLEPVYEAH) is linker 1. The tract at residues 186–277 (ISSLQKQLDS…CLYEGEITQM (92 aa)) is coil 1B. A linker 12 region spans residues 278–301 (QSHISDTSVVLSMDNNRNLDLDSI). The coil 2 stretch occupies residues 302–440 (IAEVRAQYED…ATYRKLLEGE (139 aa)). The tract at residues 441–539 (ECRMSGEHTN…LGSPSKKTMR (99 aa)) is tail.

Belongs to the intermediate filament family. In terms of assembly, heterotetramer of two type I and two type II keratins.

Its function is as follows. Has a role in hair formation. Specific component of keratin intermediate filaments in the inner root sheath (IRS) of the hair follicle. The sequence is that of Keratin, type II cytoskeletal 73 (Krt73) from Rattus norvegicus (Rat).